The primary structure comprises 266 residues: Killer cell lectin-like receptor 8 (266 aa).

The Cytoplasmic segment spans residues 1–44; sequence MSEQEVTFPTMRFHKSSGLNSQVRLEGTQRSRKAGLRVCSVPWQ. A helical; Signal-anchor for type II membrane protein transmembrane segment spans residues 45-66; it reads LIVIALGILCSLRLVIVAVFVT. The Extracellular segment spans residues 67 to 266; sequence KFFQYSQHKQ…CGKKLDKFPD (200 aa). N87 and N104 each carry an N-linked (GlcNAc...) asparagine glycan. The C-type lectin domain maps to 143 to 261; that stretch reads GVKYWFCYGT…PYYCICGKKL (119 aa). Intrachain disulfides connect C149/C154, C167/C255, C171/C257, and C236/C249.

Homodimer; disulfide-linked. Interacts with the adapter protein TYROBP/DAP12; the interaction leads to natural killer cell activation.

It is found in the cell membrane. Its function is as follows. Receptor on natural killer (NK) cells for class I MHC. The protein is Killer cell lectin-like receptor 8 (Klra8) of Mus musculus (Mouse).